An 828-amino-acid polypeptide reads, in one-letter code: Hapless 2 (828 aa).

Residues 1–32 (MKNKLINLRSKHIYKLIIIIFFCIILKYYKWC) form the signal peptide. Residues 33–680 (DFKNKVFFIQ…INTVKTLIGK (648 aa)) are Extracellular-facing. A disulfide bond links Cys53 and Cys62. A glycan (N-linked (GlcNAc...) asparagine) is linked at Asn74. Disulfide bonds link Cys142-Cys209, Cys170-Cys381, Cys172-Cys191, and Cys363-Cys388. A cd loop; involved in gamete fusion region spans residues 174-191 (TYNYFKDDEFIKRAKLKC). Residues Asn233, Asn250, Asn264, Asn293, and Asn333 are each glycosylated (N-linked (GlcNAc...) asparagine). Asn479, Asn516, Asn531, and Asn539 each carry an N-linked (GlcNAc...) asparagine glycan. An intrachain disulfide couples Cys546 to Cys592. Residues 681-701 (FAIIAILIILAPALIPLLPFF) form a helical membrane-spanning segment. Topologically, residues 702–828 (LNFFFLFIST…SGKSKIPPLR (127 aa)) are cytoplasmic. A disordered region spans residues 773-828 (RKNKKKFNKNNISSNIKHKKGGKKVKQKEPNRNSNHTSHEYADTSPSGKSKIPPLR). Basic residues predominate over residues 788 to 798 (IKHKKGGKKVK). Over residues 799-814 (QKEPNRNSNHTSHEYA) the composition is skewed to basic and acidic residues.

It belongs to the HAP2/GCS1 family.

The protein localises to the cell membrane. Its function is as follows. During fertilization, required on male gametes for their fusion with female gametes, and for subsequent ookinete formation in the host. Thereby, required for mosquito-mediated transmission to other animals. Probably initiates the fusion of gamete cell membranes by inserting part of its extracellular domain into the cell membrane of a female gamete. The chain is Hapless 2 from Plasmodium berghei (strain Anka).